The primary structure comprises 675 residues: Alpha-1,4-glucan:maltose-1-phosphate maltosyltransferase 1 (675 aa).

Alpha-maltose 1-phosphate is bound by residues K264, Q324, and D359. The active-site Nucleophile is D394. N395 is a binding site for alpha-maltose 1-phosphate. E423 (proton donor) is an active-site residue. Residue K534–Y535 coordinates alpha-maltose 1-phosphate.

Belongs to the glycosyl hydrolase 13 family. GlgE subfamily. Homodimer.

It catalyses the reaction alpha-maltose 1-phosphate + [(1-&gt;4)-alpha-D-glucosyl](n) = [(1-&gt;4)-alpha-D-glucosyl](n+2) + phosphate. With respect to regulation, is competitively inhibited by alpha-, beta- and gamma-cyclodextrins (cyclic maltooligosaccharides), unlike GlgE from M.tuberculosis. Its function is as follows. Maltosyltransferase that uses maltose 1-phosphate (M1P) as the sugar donor to elongate linear or branched alpha-(1-&gt;4)-glucans. Maltooligosaccharides with a degree of polymerization (DP) superior or equal to 4 are efficient acceptors, with DP6 being optimal in the GlgE-catalyzed polymerization with M1P. Is specific for the alpha-anomer of M1P as substrate, since the beta-anomer of M1P gives no activity. Alpha-D-glucose 1-phosphate cannot serve as a donor substrate, but alpha-maltosyl fluoride is an efficient donor in vitro. Exhibits an alpha-retaining catalytic mechanism, with evidence that maltooligosaccharide acceptors are extended at their non-reducing ends. Is also able to catalyze the reverse reaction in vitro, releasing M1P from glycogen or maltoheptaose in the presence of inorganic phosphate. Also catalyzes disproportionation reactions through maltosyl transfer between maltooligosaccharides. Is probably involved in a branched alpha-glucan biosynthetic pathway from trehalose, together with TreS, Mak and GlgB. The polypeptide is Alpha-1,4-glucan:maltose-1-phosphate maltosyltransferase 1 (glgE1) (Streptomyces coelicolor (strain ATCC BAA-471 / A3(2) / M145)).